The following is a 576-amino-acid chain: Alkaline phosphatase PhoD (576 aa).

Positions 1–32 are cleaved as a signal peptide; sequence MNSLLHHSFLKTVFSSLAIAIVTSSLSSVTIA. Zn(2+) is bound by residues Asp-68 and Thr-107. Thr-107 (phosphothreonine intermediate) is an active-site residue. Cys-108 and Cys-144 are joined by a disulfide. Substrate contacts are provided by residues Asn-128 and 188–190; that span reads KDR. The cysteines at positions 248 and 332 are disulfide-linked. Zn(2+) contacts are provided by Asp-318, His-322, Asp-363, His-364, and His-508. Cys-562 and Cys-573 form a disulfide bridge.

In terms of assembly, monomer. Zn(2+) is required as a cofactor.

The enzyme catalyses a phosphate monoester + H2O = an alcohol + phosphate. In terms of biological role, alkaline phosphatase with broad substrate specificity. Has phosphatase activity towards nucleotide and sugar phosphates with a preference to nucleotide phosphates. Has no phosphodiesterase activity. This Zymomonas mobilis subsp. mobilis (strain ATCC 31821 / ZM4 / CP4) protein is Alkaline phosphatase PhoD.